Consider the following 874-residue polypeptide: Alanine--tRNA ligase (874 aa).

Zn(2+)-binding residues include H562, H566, C665, and H669.

This sequence belongs to the class-II aminoacyl-tRNA synthetase family. Zn(2+) is required as a cofactor.

It is found in the cytoplasm. It catalyses the reaction tRNA(Ala) + L-alanine + ATP = L-alanyl-tRNA(Ala) + AMP + diphosphate. Its function is as follows. Catalyzes the attachment of alanine to tRNA(Ala) in a two-step reaction: alanine is first activated by ATP to form Ala-AMP and then transferred to the acceptor end of tRNA(Ala). Also edits incorrectly charged Ser-tRNA(Ala) and Gly-tRNA(Ala) via its editing domain. In Pseudomonas putida (strain W619), this protein is Alanine--tRNA ligase.